A 572-amino-acid chain; its full sequence is Chromatin assembly factor 1 subunit B (572 aa).

7 WD repeats span residues 11–54 (HNKE…DGKA), 64–103 (RHTK…EPEQ), 127–166 (GHLE…KISI), 169–208 (EHKS…VAFN), 228–279 (FHDD…RPIA), 301–347 (RPVA…PFGY), and 351–392 (IHYH…IPLK). Position 401 is a phosphothreonine (threonine 401). Residues 403–572 (DTAKKAKNQT…LAPDDSSKTV (170 aa)) form a disordered region. Over residues 411–430 (QTHQGSSPGSRSVEGTPSNR) the composition is skewed to polar residues. Serine 416 carries the post-translational modification Phosphoserine. The residue at position 426 (threonine 426) is a Phosphothreonine. Residues 431 to 452 (TQDPSSPCTTPSPTTQSPAPSA) are compositionally biased toward low complexity. Serine 436 carries the phosphoserine modification. The residue at position 440 (threonine 440) is a Phosphothreonine. Serine 456 and serine 465 each carry phosphoserine. Lysine 501 is modified (N6-acetyllysine). Threonine 502 and threonine 510 each carry phosphothreonine. Positions 511–529 (PLKTDTVPNPQPNSGTAPS) are enriched in polar residues. Positions 546-559 (PELKRPRLEEREGD) are enriched in basic and acidic residues.

This sequence belongs to the WD repeat HIR1 family. In terms of assembly, subunit of the CAF-1 complex that contains RBBP4, CHAF1B and CHAF1A. CHAF1A binds directly to CHAF1B. Interacts with histones H3.1, H3.2 and H3.1t.

It localises to the nucleus. It is found in the cytoplasm. Acts as a component of the histone chaperone complex chromatin assembly factor 1 (CAF-1), which assembles histone octamers onto DNA during replication and repair. CAF-1 performs the first step of the nucleosome assembly process, bringing newly synthesized histones H3 and H4 to replicating DNA; histones H2A/H2B can bind to this chromatin precursor subsequent to DNA replication to complete the histone octamer. In Mus musculus (Mouse), this protein is Chromatin assembly factor 1 subunit B.